We begin with the raw amino-acid sequence, 149 residues long: Low molecular weight protein-tyrosine-phosphatase Wzb (149 aa).

C9 functions as the Nucleophile in the catalytic mechanism. R15 is a catalytic residue. Catalysis depends on D115, which acts as the Proton donor.

Belongs to the low molecular weight phosphotyrosine protein phosphatase family.

It carries out the reaction O-phospho-L-tyrosyl-[protein] + H2O = L-tyrosyl-[protein] + phosphate. The protein operates within glycan metabolism; exopolysaccharide biosynthesis. In terms of biological role, dephosphorylates Wzc. Required for the extracellular polysaccharide colanic acid synthesis. Probably involved in the export of colanic acid from the cell to medium. Involved in protection of cells against contact-dependent growth inhibition (CDI). This chain is Low molecular weight protein-tyrosine-phosphatase Wzb (wzb), found in Salmonella typhimurium (strain LT2 / SGSC1412 / ATCC 700720).